The primary structure comprises 245 residues: 1-(5-phosphoribosyl)-5-[(5-phosphoribosylamino)methylideneamino] imidazole-4-carboxamide isomerase (245 aa).

The Proton acceptor role is filled by aspartate 8. The Proton donor role is filled by aspartate 129.

This sequence belongs to the HisA/HisF family.

The protein localises to the cytoplasm. The catalysed reaction is 1-(5-phospho-beta-D-ribosyl)-5-[(5-phospho-beta-D-ribosylamino)methylideneamino]imidazole-4-carboxamide = 5-[(5-phospho-1-deoxy-D-ribulos-1-ylimino)methylamino]-1-(5-phospho-beta-D-ribosyl)imidazole-4-carboxamide. It participates in amino-acid biosynthesis; L-histidine biosynthesis; L-histidine from 5-phospho-alpha-D-ribose 1-diphosphate: step 4/9. This is 1-(5-phosphoribosyl)-5-[(5-phosphoribosylamino)methylideneamino] imidazole-4-carboxamide isomerase from Rhodopseudomonas palustris (strain BisA53).